Consider the following 162-residue polypeptide: Auxin-responsive protein SAUR36 (162 aa).

The protein belongs to the ARG7 family. As to expression, expressed in embryo, endosperm, growing hypocotyls and shoot apical meristems.

Acts a positive regulator of leaf senescence and may mediate auxin-induced leaf senescence. Plays a role in the regulation of seed germination by gibberellins and abscisic acid (ABA). Plays a role in the regulation of light-dependent hypocotyl elongation. The sequence is that of Auxin-responsive protein SAUR36 from Arabidopsis thaliana (Mouse-ear cress).